Here is a 532-residue protein sequence, read N- to C-terminus: IQ domain-containing protein IQM4 (532 aa).

Disordered stretches follow at residues serine 47–glutamate 67 and proline 85–leucine 104. A compositionally biased stretch (basic and acidic residues) spans asparagine 56–methionine 66. The span at proline 85–valine 94 shows a compositional bias: acidic residues. Residues leucine 136–glutamate 165 enclose the IQ domain. Disordered stretches follow at residues serine 410–glutamate 443 and proline 487–arginine 513. Polar residues predominate over residues proline 487–phenylalanine 496. Residues proline 499–serine 509 show a composition bias toward pro residues.

Expressed in roots, cauline leaves and flowers, and at lower levels in rosette leaves, stems and siliques.

It is found in the cytoplasm. The protein resides in the nucleus. May be involved in biotic and abiotic stress responses. This chain is IQ domain-containing protein IQM4, found in Arabidopsis thaliana (Mouse-ear cress).